We begin with the raw amino-acid sequence, 388 residues long: Carbamoyl phosphate synthase small chain (388 aa).

The tract at residues 1–198 (MSQDLLPGVT…WPEGYAKLDK (198 aa)) is CPSase. The L-glutamine site is built by Ser-53, Gly-250, and Gly-252. A Glutamine amidotransferase type-1 domain is found at 202–388 (EVVVIDYGVK…RFAGLMDAAK (187 aa)). The active-site Nucleophile is Cys-279. Positions 280, 283, 321, 323, and 324 each coordinate L-glutamine. Catalysis depends on residues His-363 and Glu-365.

The protein belongs to the CarA family. As to quaternary structure, composed of two chains; the small (or glutamine) chain promotes the hydrolysis of glutamine to ammonia, which is used by the large (or ammonia) chain to synthesize carbamoyl phosphate. Tetramer of heterodimers (alpha,beta)4.

It carries out the reaction hydrogencarbonate + L-glutamine + 2 ATP + H2O = carbamoyl phosphate + L-glutamate + 2 ADP + phosphate + 2 H(+). The catalysed reaction is L-glutamine + H2O = L-glutamate + NH4(+). It functions in the pathway amino-acid biosynthesis; L-arginine biosynthesis; carbamoyl phosphate from bicarbonate: step 1/1. The protein operates within pyrimidine metabolism; UMP biosynthesis via de novo pathway; (S)-dihydroorotate from bicarbonate: step 1/3. Its function is as follows. Small subunit of the glutamine-dependent carbamoyl phosphate synthetase (CPSase). CPSase catalyzes the formation of carbamoyl phosphate from the ammonia moiety of glutamine, carbonate, and phosphate donated by ATP, constituting the first step of 2 biosynthetic pathways, one leading to arginine and/or urea and the other to pyrimidine nucleotides. The small subunit (glutamine amidotransferase) binds and cleaves glutamine to supply the large subunit with the substrate ammonia. This is Carbamoyl phosphate synthase small chain from Caulobacter vibrioides (strain ATCC 19089 / CIP 103742 / CB 15) (Caulobacter crescentus).